The chain runs to 167 residues: Gametocyte-specific factor 1 (167 aa).

2 consecutive CHHC U11-48K-type zinc fingers follow at residues 14–41 (LLQC…RKNH) and 48–75 (LATC…DDKS). The Zn(2+) site is built by C17, H23, H33, C37, C51, H57, H67, and C71.

It belongs to the UPF0224 (FAM112) family.

Its subcellular location is the cytoplasm. In terms of biological role, required for spermatogenesis and is involved in the suppression of retrotransposon transcription in male germ cells. The polypeptide is Gametocyte-specific factor 1 (GTSF1) (Bos taurus (Bovine)).